Consider the following 327-residue polypeptide: Tryptophan--tRNA ligase (327 aa).

ATP-binding positions include 9–11 (RPT) and 17–18 (GN). The short motif at 10-18 (PTGNLHLGN) is the 'HIGH' region element. Residue Asp133 participates in L-tryptophan binding. ATP-binding positions include 145-147 (GKD), Val186, and 194-198 (KMGKS). The short motif at 194 to 198 (KMGKS) is the 'KMSKS' region element.

It belongs to the class-I aminoacyl-tRNA synthetase family. Homodimer.

Its subcellular location is the cytoplasm. The enzyme catalyses tRNA(Trp) + L-tryptophan + ATP = L-tryptophyl-tRNA(Trp) + AMP + diphosphate + H(+). In terms of biological role, catalyzes the attachment of tryptophan to tRNA(Trp). The chain is Tryptophan--tRNA ligase from Porphyromonas gingivalis (strain ATCC BAA-308 / W83).